A 652-amino-acid chain; its full sequence is Pesticidal crystal protein Cry3Bb (652 aa).

Over residues 1–12 (MNPNNRSEHDTI) the composition is skewed to basic and acidic residues. Disordered stretches follow at residues 1–33 (MNPNNRSEHDTIKVTPNSELQTNHNQYPLADNP) and 433–465 (KNETSTQTYDSKRNNGHVSAQDSIDQLPPETTD). The span at 14–33 (VTPNSELQTNHNQYPLADNP) shows a compositional bias: polar residues.

Belongs to the delta endotoxin family. Monomer.

Promotes colloidosmotic lysis by binding to the midgut epithelial cells of Coleoptera. Has moderate level of toxicity to southern corn rootworm. This Bacillus thuringiensis protein is Pesticidal crystal protein Cry3Bb (cry3Bb).